The chain runs to 67 residues: Small ribosomal subunit protein bS21 (67 aa).

It belongs to the bacterial ribosomal protein bS21 family.

The polypeptide is Small ribosomal subunit protein bS21 (Granulibacter bethesdensis (strain ATCC BAA-1260 / CGDNIH1)).